The following is a 202-amino-acid chain: Transmembrane gamma-carboxyglutamic acid protein 2 (202 aa).

The first 23 residues, 1 to 23 (MRGHPSLLLLYMALTTCLDTSPS), serve as a signal peptide directing secretion. Positions 24-49 (EETDQEVFLGPPEAQSFLSSHTRIPR) are excised as a propeptide. Residues 50–96 (ANHWDLELLTPGNLERECLEERCSWEEAREYFEDNTLTERFWESYIY) enclose the Gla domain. The Extracellular portion of the chain corresponds to 50–109 (ANHWDLELLTPGNLERECLEERCSWEEAREYFEDNTLTERFWESYIYNGKGGRGRVDVAS). A disulfide bridge links Cys67 with Cys72. A 4-carboxyglutamate modification is found at Glu70. The helical transmembrane segment at 110–130 (LAVGLTGGILLIVLAGLGAFW) threads the bilayer. The Cytoplasmic segment spans residues 131 to 202 (YLRWRQHRGQ…PPYTSLRRPH (72 aa)). Residues 143–202 (CPQEAGLISPLSPLNPLGPPTPLPPPPPPPPGLPTYEQALAASGVHDAPPPPYTSLRRPH) are disordered. Over residues 158 to 175 (PLGPPTPLPPPPPPPPGL) the composition is skewed to pro residues. Positions 175–178 (LPTY) match the LPXY motif; mediates binding to WW domain-containing proteins motif. Positions 192–195 (PPPY) match the PPXY motif; mediates binding to WW domain-containing proteins motif.

Interacts with NEDD4. Interacts (via cytoplasmic domain) with transcriptional coactivator YAP1. Gamma-carboxyglutamate residues are formed by vitamin K dependent carboxylation. These residues are essential for the binding of calcium. As to expression, widely expressed with highest levels in kidney. Also highly expressed in the thyroid.

The protein resides in the cell membrane. The protein is Transmembrane gamma-carboxyglutamic acid protein 2 of Homo sapiens (Human).